Here is a 427-residue protein sequence, read N- to C-terminus: Gamma-glutamyl phosphate reductase (427 aa).

Belongs to the gamma-glutamyl phosphate reductase family.

The protein resides in the cytoplasm. The catalysed reaction is L-glutamate 5-semialdehyde + phosphate + NADP(+) = L-glutamyl 5-phosphate + NADPH + H(+). The protein operates within amino-acid biosynthesis; L-proline biosynthesis; L-glutamate 5-semialdehyde from L-glutamate: step 2/2. In terms of biological role, catalyzes the NADPH-dependent reduction of L-glutamate 5-phosphate into L-glutamate 5-semialdehyde and phosphate. The product spontaneously undergoes cyclization to form 1-pyrroline-5-carboxylate. In Anaeromyxobacter sp. (strain K), this protein is Gamma-glutamyl phosphate reductase.